The chain runs to 494 residues: Ribonuclease H (494 aa).

Disordered stretches follow at residues 79 to 148 (NRRR…APPP) and 205 to 231 (RSGLEKSDRGDGAASLSALSEPQVGLR). Composition is skewed to polar residues over residues 84–100 (GSTSKKAQVKSSVNQLA) and 131–143 (PTTSRASGETRTS). The RNase H type-1 domain maps to 272–488 (SSVPQVVYVD…ADVLAVAGAR (217 aa)). Mg(2+) contacts are provided by Asp-281, Glu-325, Asp-374, and Asp-480.

This sequence belongs to the RNase H family. In terms of assembly, monomer. Mg(2+) is required as a cofactor.

The catalysed reaction is Endonucleolytic cleavage to 5'-phosphomonoester.. Its function is as follows. Endonuclease that specifically degrades the RNA of RNA-DNA hybrids. This chain is Ribonuclease H (RNH1), found in Crithidia fasciculata.